The chain runs to 33 residues: Protamine TP14 (33 aa).

Positions 1–33 are disordered; sequence MPRRRRSSRPPVRRRRRPRVSRRRRRRGGRRRR.

Testis.

It is found in the nucleus. Its subcellular location is the chromosome. Its function is as follows. Protamines substitute for histones in the chromatin of sperm during the haploid phase of spermatogenesis. They compact sperm DNA into a highly condensed, stable and inactive complex. The protein is Protamine TP14 of Oncorhynchus mykiss (Rainbow trout).